The following is a 152-amino-acid chain: NADH-ubiquinone oxidoreductase chain 4 (152 aa).

4 helical membrane-spanning segments follow: residues 2-22 (FSGA…YFCL), 43-63 (ILLP…LALP), 84-104 (ITIV…LHMF), and 128-148 (MLMF…NIIL).

It belongs to the complex I subunit 4 family.

The protein resides in the mitochondrion membrane. The enzyme catalyses a ubiquinone + NADH + 5 H(+)(in) = a ubiquinol + NAD(+) + 4 H(+)(out). Its function is as follows. Core subunit of the mitochondrial membrane respiratory chain NADH dehydrogenase (Complex I) that is believed to belong to the minimal assembly required for catalysis. Complex I functions in the transfer of electrons from NADH to the respiratory chain. The immediate electron acceptor for the enzyme is believed to be ubiquinone. This chain is NADH-ubiquinone oxidoreductase chain 4 (MT-ND4), found in Macaca fascicularis (Crab-eating macaque).